We begin with the raw amino-acid sequence, 122 residues long: Holo-[acyl-carrier-protein] synthase (122 aa).

The Mg(2+) site is built by Asp5 and Glu54.

The protein belongs to the P-Pant transferase superfamily. AcpS family. Requires Mg(2+) as cofactor.

It localises to the cytoplasm. It catalyses the reaction apo-[ACP] + CoA = holo-[ACP] + adenosine 3',5'-bisphosphate + H(+). Transfers the 4'-phosphopantetheine moiety from coenzyme A to a Ser of acyl-carrier-protein. The chain is Holo-[acyl-carrier-protein] synthase from Aquifex aeolicus (strain VF5).